Here is a 367-residue protein sequence, read N- to C-terminus: tRNA (cytosine(34)-C(5))-methyltransferase, mitochondrial (367 aa).

S-adenosyl-L-methionine-binding positions include 170-176 (CAAPGGK), Glu-193, Asp-224, and Asp-242. Cys-296 acts as the Nucleophile in catalysis.

The protein belongs to the class I-like SAM-binding methyltransferase superfamily. RsmB/NOP family.

Its subcellular location is the mitochondrion matrix. The catalysed reaction is cytidine(34) in mitochondrial tRNA + S-adenosyl-L-methionine = 5-methylcytidine(34) in mitochondrial tRNA + S-adenosyl-L-homocysteine + H(+). Mitochondrial tRNA methyltransferase that mediates methylation of cytosine to 5-methylcytosine (m5C) at position 34 of mt-tRNA(Met). mt-tRNA(Met) methylation at cytosine(34) takes place at the wobble position of the anticodon and initiates the formation of 5-formylcytosine (f(5)c) at this position. mt-tRNA(Met) containing the f(5)c modification at the wobble position enables recognition of the AUA codon in addition to the AUG codon, expanding codon recognition in mitochondrial translation. The protein is tRNA (cytosine(34)-C(5))-methyltransferase, mitochondrial of Danio rerio (Zebrafish).